The following is a 307-amino-acid chain: 17-beta-hydroxysteroid dehydrogenase type 3 (307 aa).

Residues 6 to 26 (IIFVLTGTCAILVFGGKIASL) form a helical membrane-spanning segment. 47–76 (GKWAVITGGSDGIGRAYAEELSKQGMSVII) serves as a coordination point for NADP(+). Residue serine 187 coordinates substrate. The Proton acceptor role is filled by tyrosine 200.

This sequence belongs to the short-chain dehydrogenases/reductases (SDR) family. In terms of tissue distribution, expression shows strong sexual dimorphism. In female, highly expressed in ovaries, and at lower levels in skin muscle, eyes and liver. In males, strongly expressed in liver and at lower levels in testis, spleen, kidney, intestine and muscle.

The protein localises to the endoplasmic reticulum. The protein resides in the membrane. The enzyme catalyses a 17beta-hydroxy steroid + NADP(+) = a 17-oxo steroid + NADPH + H(+). The catalysed reaction is testosterone + NADP(+) = androst-4-ene-3,17-dione + NADPH + H(+). It carries out the reaction 3beta-hydroxyandrost-5-en-17-one + NADPH + H(+) = androst-5-en-3beta,17beta-diol + NADP(+). It catalyses the reaction 3beta-hydroxy-5alpha-androstan-17-one + NADPH + H(+) = 5alpha-androstane-3beta,17beta-diol + NADP(+). The enzyme catalyses androst-4-ene-3,11,17-trione + NADPH + H(+) = 17beta-hydroxyandrost-4-ene-3,11-dione + NADP(+). The catalysed reaction is 11beta-hydroxyandrost-4-ene-3,17-dione + NADPH + H(+) = 11beta,17beta-dihydroxyandrost-4-ene-3-one + NADP(+). Its pathway is hormone biosynthesis; testosterone biosynthesis. It participates in steroid metabolism. Functionally, catalyzes the conversion of 17-oxosteroids to 17beta-hydroxysteroids in the presence of NADPH. Favors the reduction of androstenedione to testosterone. Testosterone is the key androgen driving male development and function. Among further tested androgens epiandrosterone and dehydroepiandrosterone are accepted as substrates and reduced at C-17. Can also reduce 11-ketoandrostenedione as well as 11beta-hydroxyandrostenedione at C-17 to the respective testosterone forms. Cannot use androsterone and androstanedione as substrates. This is 17-beta-hydroxysteroid dehydrogenase type 3 (hsd17b3) from Danio rerio (Zebrafish).